We begin with the raw amino-acid sequence, 62 residues long: Sperm protamine P1 (62 aa).

A disordered region spans residues 1-62 (MARYRRHSRS…RYSRRGRRRY (62 aa)).

The protein belongs to the protamine P1 family. In terms of tissue distribution, testis.

It is found in the nucleus. It localises to the chromosome. In terms of biological role, protamines substitute for histones in the chromatin of sperm during the haploid phase of spermatogenesis. They compact sperm DNA into a highly condensed, stable and inactive complex. The sequence is that of Sperm protamine P1 (PRM1) from Antechinomys laniger (Eastern jerboa marsupial).